Reading from the N-terminus, the 900-residue chain is Alanine--tRNA ligase (900 aa).

Residues His604, His608, Cys708, and His712 each coordinate Zn(2+).

The protein belongs to the class-II aminoacyl-tRNA synthetase family. The cofactor is Zn(2+).

Its subcellular location is the cytoplasm. The enzyme catalyses tRNA(Ala) + L-alanine + ATP = L-alanyl-tRNA(Ala) + AMP + diphosphate. Its function is as follows. Catalyzes the attachment of alanine to tRNA(Ala) in a two-step reaction: alanine is first activated by ATP to form Ala-AMP and then transferred to the acceptor end of tRNA(Ala). Also edits incorrectly charged Ser-tRNA(Ala) and Gly-tRNA(Ala) via its editing domain. The protein is Alanine--tRNA ligase of Saccharolobus islandicus (strain L.S.2.15 / Lassen #1) (Sulfolobus islandicus).